The chain runs to 441 residues: Lysine histidine transporter 2 (441 aa).

The Cytoplasmic portion of the chain corresponds to 1-32; the sequence is MGNSEMSASEVAAAKQKNVDDWLPITSSRNAK. A helical transmembrane segment spans residues 33–53; the sequence is WWYSAFHNVTAMVGAGVLSLP. The Extracellular portion of the chain corresponds to 54–58; the sequence is YAMSN. Residues 59 to 79 form a helical membrane-spanning segment; the sequence is LGWGPGVTIMVMSWIITLYTL. Over 80–110 the chain is Cytoplasmic; it reads WQMVEMHEIVPGKRLDRYHELGQHAFGEKLG. Residues 111-131 traverse the membrane as a helical segment; the sequence is LWIVVPQQLIVEVGVDIVYMV. Residues 132 to 152 are Extracellular-facing; it reads TGGASLKKVHQLVCPDCKEIR. A helical transmembrane segment spans residues 153–173; sequence TTFWIMIFASVHFVISHLPNF. Residues 174–175 lie on the Cytoplasmic side of the membrane; the sequence is NS. Residues 176–196 traverse the membrane as a helical segment; the sequence is ISIISLAAAVMSLTYSTIAWA. At 197-222 the chain is on the extracellular side; that stretch reads ASVHKGVHPDVDYSPRASTDVGKVFN. The helical transmembrane segment at 223–243 threads the bilayer; the sequence is FLNALGDVAFAYAGHNVVLEI. Residues 244–263 lie on the Cytoplasmic side of the membrane; it reads QATIPSTPEMPSKVPMWRGV. Residues 264 to 284 form a helical membrane-spanning segment; that stretch reads IVAYIVVAICYFPVAFLGYYI. At 285 to 300 the chain is on the extracellular side; sequence FGNSVDDNILITLEKP. A helical membrane pass occupies residues 301-321; sequence IWLIAMANMFVVIHVIGSYQI. Residues 322–347 are Cytoplasmic-facing; the sequence is FAMPVFDMLETVLVKKMNFNPSFKLR. A helical transmembrane segment spans residues 348–370; that stretch reads FITRSLYVAFTMIVAICVPFFGG. The Extracellular portion of the chain corresponds to 371 to 373; sequence LLG. A helical membrane pass occupies residues 374 to 396; that stretch reads FFGGFAFAPTTYYLPCIMWLVLK. Over 397-406 the chain is Cytoplasmic; sequence KPKRFGLSWT. The helical transmembrane segment at 407-427 threads the bilayer; the sequence is ANWFCIIVGVLLTILAPIGGL. Residues 428–441 lie on the Extracellular side of the membrane; sequence RTIIINAKTYKFFS.

It belongs to the amino acid/polyamine transporter 2 family. Amino acid/auxin permease (AAAP) (TC 2.A.18.2) subfamily. In terms of tissue distribution, expressed in flower buds and to lower levels in leaves and stems. Not detected in roots and siliques. Restricted to the tapetum cell layer.

Its subcellular location is the cell membrane. With respect to regulation, inhibited by diethylstibestrol (DES), 2,4-dinitrophenol (DNP) and carbonlycyanide m-chlorophenylhydrazone (CCCP). Functionally, amino acid-proton symporter. Transporter with a broad specificity for neutral and acidic amino acids. Basic amino acids are only marginally transported. Involved in import of amino acids into the tapetum cells for synthesis of compounds important for microspore structure. The sequence is that of Lysine histidine transporter 2 (LHT2) from Arabidopsis thaliana (Mouse-ear cress).